The sequence spans 367 residues: Diphthine methyltransferase homolog (367 aa).

WD repeat units lie at residues 84-124, 132-173, 180-220, and 234-274; these read NFNS…KKLE, SLSN…SKVT, AHDY…NHND, and RCDM…QPII.

This sequence belongs to the DPH7 family.

The enzyme catalyses diphthine methyl ester-[translation elongation factor 2] + H2O = diphthine-[translation elongation factor 2] + methanol + H(+). It functions in the pathway protein modification; peptidyl-diphthamide biosynthesis. In terms of biological role, catalyzes the demethylation of diphthine methyl ester to form diphthine, an intermediate diphthamide biosynthesis, a post-translational modification of histidine which occurs in translation elongation factor 2 (efbA). The sequence is that of Diphthine methyltransferase homolog (wdr85) from Dictyostelium discoideum (Social amoeba).